Consider the following 244-residue polypeptide: Serine acetyltransferase (244 aa).

The protein belongs to the transferase hexapeptide repeat family.

Its subcellular location is the cytoplasm. It carries out the reaction L-serine + acetyl-CoA = O-acetyl-L-serine + CoA. Its pathway is amino-acid biosynthesis; L-cysteine biosynthesis; L-cysteine from L-serine: step 1/2. In Synechococcus elongatus (strain ATCC 33912 / PCC 7942 / FACHB-805) (Anacystis nidulans R2), this protein is Serine acetyltransferase (cysE).